The sequence spans 351 residues: Anthranilate phosphoribosyltransferase (351 aa).

Residues glycine 80, 83–84 (GD), threonine 88, 90–93 (NIST), 108–116 (KHGNRSVTS), and serine 120 contribute to the 5-phospho-alpha-D-ribose 1-diphosphate site. Glycine 80 provides a ligand contact to anthranilate. Residue serine 92 coordinates Mg(2+). Asparagine 111 is a binding site for anthranilate. Residue arginine 166 participates in anthranilate binding. Aspartate 229 and glutamate 230 together coordinate Mg(2+).

This sequence belongs to the anthranilate phosphoribosyltransferase family. Homodimer. Mg(2+) is required as a cofactor.

It catalyses the reaction N-(5-phospho-beta-D-ribosyl)anthranilate + diphosphate = 5-phospho-alpha-D-ribose 1-diphosphate + anthranilate. It functions in the pathway amino-acid biosynthesis; L-tryptophan biosynthesis; L-tryptophan from chorismate: step 2/5. Catalyzes the transfer of the phosphoribosyl group of 5-phosphorylribose-1-pyrophosphate (PRPP) to anthranilate to yield N-(5'-phosphoribosyl)-anthranilate (PRA). The chain is Anthranilate phosphoribosyltransferase from Chlorobium chlorochromatii (strain CaD3).